The sequence spans 386 residues: uncharacterized protein (386 aa).

12 helical membrane passes run 8-28 (VFVI…IAPI), 43-63 (IGLI…PVGV), 79-99 (FFYG…GFLI), 102-122 (IFTG…IAAI), 134-154 (IFNS…GILA), 156-176 (MYGI…AAII), 216-236 (FIIN…LALY), 241-261 (NITI…MALL), 272-292 (LGNI…YLLS), 297-317 (FLTI…SSTA), 342-362 (INIG…ILGI), and 365-385 (MYKF…LRIE).

It belongs to the major facilitator superfamily.

It localises to the cell membrane. This is an uncharacterized protein from Methanocaldococcus jannaschii (strain ATCC 43067 / DSM 2661 / JAL-1 / JCM 10045 / NBRC 100440) (Methanococcus jannaschii).